The primary structure comprises 176 residues: Late lactation protein (176 aa).

The first 18 residues, 1 to 18 (MKVLFFTIALSLFSILHA), serve as a signal peptide directing secretion. Cys-78 and Cys-171 are joined by a disulfide.

The protein belongs to the calycin superfamily. Lipocalin family. As to expression, mammary gland. Secreted in milk.

Its subcellular location is the secreted. Probably serves a role in the transport of a small ligand released during the hydrolysis of milk fat. The protein is Late lactation protein of Trichosurus vulpecula (Brush-tailed possum).